A 280-amino-acid chain; its full sequence is Putative pyruvate, phosphate dikinase regulatory protein 1 (280 aa).

152–159 (GVSRTSKT) contacts ADP.

The protein belongs to the pyruvate, phosphate/water dikinase regulatory protein family. PDRP subfamily.

The catalysed reaction is N(tele)-phospho-L-histidyl/L-threonyl-[pyruvate, phosphate dikinase] + ADP = N(tele)-phospho-L-histidyl/O-phospho-L-threonyl-[pyruvate, phosphate dikinase] + AMP + H(+). The enzyme catalyses N(tele)-phospho-L-histidyl/O-phospho-L-threonyl-[pyruvate, phosphate dikinase] + phosphate + H(+) = N(tele)-phospho-L-histidyl/L-threonyl-[pyruvate, phosphate dikinase] + diphosphate. Functionally, bifunctional serine/threonine kinase and phosphorylase involved in the regulation of the pyruvate, phosphate dikinase (PPDK) by catalyzing its phosphorylation/dephosphorylation. In Latilactobacillus sakei subsp. sakei (strain 23K) (Lactobacillus sakei subsp. sakei), this protein is Putative pyruvate, phosphate dikinase regulatory protein 1.